Reading from the N-terminus, the 161-residue chain is 3-isopropylmalate dehydratase small subunit (161 aa).

This sequence belongs to the LeuD family. LeuD type 2 subfamily. As to quaternary structure, heterodimer of LeuC and LeuD.

The catalysed reaction is (2R,3S)-3-isopropylmalate = (2S)-2-isopropylmalate. The protein operates within amino-acid biosynthesis; L-leucine biosynthesis; L-leucine from 3-methyl-2-oxobutanoate: step 2/4. Catalyzes the isomerization between 2-isopropylmalate and 3-isopropylmalate, via the formation of 2-isopropylmaleate. The chain is 3-isopropylmalate dehydratase small subunit from Pyrobaculum calidifontis (strain DSM 21063 / JCM 11548 / VA1).